Here is an 858-residue protein sequence, read N- to C-terminus: Ubiquitin carboxyl-terminal hydrolase 5 (858 aa).

A2 is subject to N-acetylalanine. Positions R74–P96 are disordered. K113 is covalently cross-linked (Glycyl lysine isopeptide (Lys-Gly) (interchain with G-Cter in SUMO)). S149 and S156 each carry phosphoserine. A UBP-type; degenerate zinc finger spans residues Q175–M283. The cysteines at positions 195 and 816 are disulfide-linked. Residues C199 and C202 each contribute to the Zn(2+) site. W209 provides a ligand contact to substrate. C219 is a binding site for Zn(2+). Residue R221 to F224 participates in substrate binding. A Zn(2+)-binding site is contributed by H232. Residues Y259, Y261, and D264 each coordinate substrate. T292 is modified (phosphothreonine). One can recognise a USP domain in the interval T326 to V856. C335 functions as the Nucleophile in the catalytic mechanism. T623 is subject to Phosphothreonine. UBA domains lie at M654 to H695 and P722 to H762. Phosphoserine occurs at positions 779, 783, and 785. H818 (proton acceptor) is an active-site residue.

This sequence belongs to the peptidase C19 family. As to quaternary structure, homodimer. Interacts with TRIML1. Post-translationally, ubiquitinated by SMURF1; leading to proteasomal degradation. In terms of processing, SUMOylated at Lys-113; SUMOylation affects the interaction with Cav3.2 channels.

It is found in the cytoplasm. The protein localises to the stress granule. It localises to the nucleus. It carries out the reaction Thiol-dependent hydrolysis of ester, thioester, amide, peptide and isopeptide bonds formed by the C-terminal Gly of ubiquitin (a 76-residue protein attached to proteins as an intracellular targeting signal).. Functionally, deubiquitinating enzyme that participates in a wide range of cellular processes by specifically cleaving isopeptide bonds between ubiquitin and substrate proteins or ubiquitin itself. Affects thereby important cellular signaling pathways such as NF-kappa-B, Wnt/beta-catenin, and cytokine production by regulating ubiquitin-dependent protein degradation. Participates in the activation of the Wnt signaling pathway by promoting FOXM1 deubiquitination and stabilization that induces the recruitment of beta-catenin to Wnt target gene promoter. Regulates the assembly and disassembly of heat-induced stress granules by mediating the hydrolysis of unanchored ubiquitin chains. Promotes lipopolysaccharide-induced apoptosis and inflammatory response by stabilizing the TXNIP protein. Affects T-cell biology by stabilizing the inhibitory receptor on T-cells PDC1. Acts as a negative regulator of autophagy by regulating ULK1 at both protein and mRNA levels. Acts also as a negative regulator of type I interferon production by simultaneously removing both 'Lys-48'-linked unanchored and 'Lys-63'-linked anchored polyubiquitin chains on the transcription factor IRF3. Modulates the stability of DNA mismatch repair protein MLH1 and counteracts the effect of the ubiquitin ligase UBR4. Upon activation by insulin, it gets phosphorylated through mTORC1-mediated phosphorylation to enhance YTHDF1 stability by removing 'Lys-11'-linked polyubiquitination. May also deubiquitinate other substrates such as the calcium channel CACNA1H. The sequence is that of Ubiquitin carboxyl-terminal hydrolase 5 (UBP5) from Pongo abelii (Sumatran orangutan).